The sequence spans 93 residues: Defensin 5 (93 aa).

Positions 1–19 (MKKLVLLSALVLLALQVEA) are cleaved as a signal peptide. Positions 20-58 (EPTPKTDEGTKTDEQPGKEDQVVSVSIEGQGDPAFQDAV) are excised as a propeptide. Cystine bridges form between cysteine 64–cysteine 92, cysteine 66–cysteine 81, and cysteine 71–cysteine 91.

It belongs to the alpha-defensin family. In terms of tissue distribution, small intestine. Not present in heart, liver, spleen, kidney, large intestine and colon.

The protein resides in the secreted. Its function is as follows. Probably contributes to the antimicrobial barrier function of the small intestine. This Rattus norvegicus (Rat) protein is Defensin 5.